Consider the following 587-residue polypeptide: Putative adenylate cyclase 3 (587 aa).

A Guanylate cyclase domain is found at 12 to 127 (AILAADAVGY…DGVNVAARIE (116 aa)). 5 TPR repeats span residues 343 to 376 (LLVR…DPGM), 421 to 454 (PQGH…DPNS), 455 to 488 (ANAY…DPQF), 490 to 522 (LSLH…APRS), and 524 to 556 (MTRF…NPSF).

It belongs to the adenylyl cyclase class-3 family.

The enzyme catalyses ATP = 3',5'-cyclic AMP + diphosphate. The protein is Putative adenylate cyclase 3 (cya3) of Rhizobium meliloti (strain 1021) (Ensifer meliloti).